The sequence spans 227 residues: Cytochrome c oxidase subunit 2 (227 aa).

Residues 1–14 (MAYPMQLGFQDATS) lie on the Mitochondrial intermembrane side of the membrane. A helical membrane pass occupies residues 15–45 (PIMEELLHFHDHTLMIVFLISSLVLYVISLM). At 46 to 59 (LTTKLTHTSTMDAQ) the chain is on the mitochondrial matrix side. A helical transmembrane segment spans residues 60–87 (EVETIWTILPAIILILIALPSLRILYMM). Topologically, residues 88–227 (DEINNPSLTV…YFEKWSASML (140 aa)) are mitochondrial intermembrane. The Cu cation site is built by H161, C196, E198, C200, H204, and M207. Residue E198 participates in Mg(2+) binding. Residue Y218 is modified to Phosphotyrosine.

It belongs to the cytochrome c oxidase subunit 2 family. As to quaternary structure, component of the cytochrome c oxidase (complex IV, CIV), a multisubunit enzyme composed of 14 subunits. The complex is composed of a catalytic core of 3 subunits MT-CO1, MT-CO2 and MT-CO3, encoded in the mitochondrial DNA, and 11 supernumerary subunits COX4I, COX5A, COX5B, COX6A, COX6B, COX6C, COX7A, COX7B, COX7C, COX8 and NDUFA4, which are encoded in the nuclear genome. The complex exists as a monomer or a dimer and forms supercomplexes (SCs) in the inner mitochondrial membrane with NADH-ubiquinone oxidoreductase (complex I, CI) and ubiquinol-cytochrome c oxidoreductase (cytochrome b-c1 complex, complex III, CIII), resulting in different assemblies (supercomplex SCI(1)III(2)IV(1) and megacomplex MCI(2)III(2)IV(2)). Found in a complex with TMEM177, COA6, COX18, COX20, SCO1 and SCO2. Interacts with TMEM177 in a COX20-dependent manner. Interacts with COX20. Interacts with COX16. It depends on Cu cation as a cofactor.

The protein resides in the mitochondrion inner membrane. It carries out the reaction 4 Fe(II)-[cytochrome c] + O2 + 8 H(+)(in) = 4 Fe(III)-[cytochrome c] + 2 H2O + 4 H(+)(out). Component of the cytochrome c oxidase, the last enzyme in the mitochondrial electron transport chain which drives oxidative phosphorylation. The respiratory chain contains 3 multisubunit complexes succinate dehydrogenase (complex II, CII), ubiquinol-cytochrome c oxidoreductase (cytochrome b-c1 complex, complex III, CIII) and cytochrome c oxidase (complex IV, CIV), that cooperate to transfer electrons derived from NADH and succinate to molecular oxygen, creating an electrochemical gradient over the inner membrane that drives transmembrane transport and the ATP synthase. Cytochrome c oxidase is the component of the respiratory chain that catalyzes the reduction of oxygen to water. Electrons originating from reduced cytochrome c in the intermembrane space (IMS) are transferred via the dinuclear copper A center (CU(A)) of subunit 2 and heme A of subunit 1 to the active site in subunit 1, a binuclear center (BNC) formed by heme A3 and copper B (CU(B)). The BNC reduces molecular oxygen to 2 water molecules using 4 electrons from cytochrome c in the IMS and 4 protons from the mitochondrial matrix. This Rusa unicolor (Sambar) protein is Cytochrome c oxidase subunit 2 (MT-CO2).